The sequence spans 212 residues: Large ribosomal subunit protein uL3 (212 aa).

The segment at 135–161 (MTHGNSLSHRAPGSIGQNQSPGKVFKG) is disordered. Residue Gln153 is modified to N5-methylglutamine.

It belongs to the universal ribosomal protein uL3 family. In terms of assembly, part of the 50S ribosomal subunit. Forms a cluster with proteins L14 and L19. Methylated by PrmB.

Its function is as follows. One of the primary rRNA binding proteins, it binds directly near the 3'-end of the 23S rRNA, where it nucleates assembly of the 50S subunit. The chain is Large ribosomal subunit protein uL3 from Alteromonas mediterranea (strain DSM 17117 / CIP 110805 / LMG 28347 / Deep ecotype).